We begin with the raw amino-acid sequence, 119 residues long: Protein TusC (119 aa).

The protein belongs to the DsrF/TusC family. Heterohexamer, formed by a dimer of trimers. The hexameric TusBCD complex contains 2 copies each of TusB, TusC and TusD. The TusBCD complex interacts with TusE.

Its subcellular location is the cytoplasm. Functionally, part of a sulfur-relay system required for 2-thiolation of 5-methylaminomethyl-2-thiouridine (mnm(5)s(2)U) at tRNA wobble positions. This Shigella sonnei (strain Ss046) protein is Protein TusC.